The chain runs to 399 residues: All trans-polyprenyl-diphosphate synthase PDSS2 (399 aa).

This sequence belongs to the FPP/GGPP synthase family. As to quaternary structure, heterotetramer composed of 2 PDSS1/DPS1 and 2 PDSS2/DLP1 subunits.

Its subcellular location is the mitochondrion. The catalysed reaction is 7 isopentenyl diphosphate + (2E,6E)-farnesyl diphosphate = all-trans-decaprenyl diphosphate + 7 diphosphate. It carries out the reaction 6 isopentenyl diphosphate + (2E,6E)-farnesyl diphosphate = all-trans-nonaprenyl diphosphate + 6 diphosphate. It participates in cofactor biosynthesis; ubiquinone biosynthesis. Heterotetrameric enzyme that catalyzes the condensation of farnesyl diphosphate (FPP), which acts as a primer, and isopentenyl diphosphate (IPP) to produce prenyl diphosphates of varying chain lengths and participates in the determination of the side chain of ubiquinone. Supplies nona and decaprenyl diphosphate, the precursors for the side chain of the isoprenoid quinones ubiquinone-9 (Q9) and ubiquinone-10 (Q10) respectively. The enzyme adds isopentenyl diphosphate molecules sequentially to farnesyl diphosphate with trans stereochemistry. May play a role during cerebellar development. May regulate mitochondrial respiratory chain function. This Homo sapiens (Human) protein is All trans-polyprenyl-diphosphate synthase PDSS2.